A 568-amino-acid polypeptide reads, in one-letter code: Matrix metalloproteinase-21 (568 aa).

An N-terminal signal peptide occupies residues 1–24 (MLAASVLRLTLPLCWLVAPQPTQP). A propeptide spanning residues 25 to 143 (ERLFHSRDRS…SLGLRPRARQ (119 aa)) is cleaved from the precursor. The short motif at 110 to 117 (PRCGVPDT) is the Cysteine switch element. Zn(2+) contacts are provided by Cys-112 and His-282. Residue Glu-283 is part of the active site. Residues His-286 and His-292 each contribute to the Zn(2+) site. Cys-328 and Cys-559 are disulfide-bonded. 4 Hemopexin repeats span residues 329–388 (KGSF…WRGI), 390–446 (TQSI…FPGI), 447–495 (PSPL…FPAI), and 502–558 (FRNL…WFDV). Asn-371 carries an N-linked (GlcNAc...) asparagine glycan.

Belongs to the peptidase M10A family. Zn(2+) is required as a cofactor. It depends on Ca(2+) as a cofactor. The precursor is cleaved by a furin endopeptidase.

The protein localises to the secreted. Functionally, plays a specialized role in the generation of left-right asymmetry during embryogenesis. May act as a negative regulator of the NOTCH-signaling pathway. Cleaves alpha-1-antitrypsin. The chain is Matrix metalloproteinase-21 (Mmp21) from Mus musculus (Mouse).